The primary structure comprises 265 residues: Hydroxyethylthiazole kinase (265 aa).

Residue methionine 36 coordinates substrate. Residues lysine 112 and serine 160 each coordinate ATP. Glycine 187 serves as a coordination point for substrate.

Belongs to the Thz kinase family. Mg(2+) is required as a cofactor.

It catalyses the reaction 5-(2-hydroxyethyl)-4-methylthiazole + ATP = 4-methyl-5-(2-phosphooxyethyl)-thiazole + ADP + H(+). It participates in cofactor biosynthesis; thiamine diphosphate biosynthesis; 4-methyl-5-(2-phosphoethyl)-thiazole from 5-(2-hydroxyethyl)-4-methylthiazole: step 1/1. Catalyzes the phosphorylation of the hydroxyl group of 4-methyl-5-beta-hydroxyethylthiazole (THZ). This is Hydroxyethylthiazole kinase from Clostridium perfringens (strain ATCC 13124 / DSM 756 / JCM 1290 / NCIMB 6125 / NCTC 8237 / Type A).